We begin with the raw amino-acid sequence, 260 residues long: MSKSVFVGELTWKEYEARVAAGDCVLMLPVGALEQHGHHMCMNVDVLLPTAVCKRVAERIGALVMPGLQYGYKSQQKSGGGNHFPGTTSLDGATLTGTVQDIIRELARHGARRLVLMNGHYENSMFIVEGIDLALRELRYAGIQDFKVVVLSYWDFVKDPAVIQQLYPEGFLGWDIEHGGVFETSLMLALYPDLVDLDRVVDHPPATFPPYDVFPVDPARTPAPGTLSSAKTASREKGELILEVCVQGIADAIREEFPPT.

Position 34 (glutamate 34) interacts with Mn(2+). Zn(2+)-binding residues include glutamate 34, histidine 36, and aspartate 45. Aspartate 45 contacts Mn(2+). Serine 78 is a creatine binding site. Residue histidine 120 coordinates Mn(2+). Histidine 120 contacts Zn(2+). Creatine is bound by residues tyrosine 121, tryptophan 174, aspartate 175, and histidine 178. Residue glutamate 183 participates in Zn(2+) binding.

This sequence belongs to the creatininase superfamily. As to quaternary structure, homohexamer; trimer of dimers. Zn(2+) serves as cofactor. It depends on Mn(2+) as a cofactor.

The enzyme catalyses creatinine + H2O = creatine. The protein operates within amine and polyamine degradation; creatinine degradation. Its activity is regulated as follows. Is markedly inactivated in vitro by heavy metal ions, N-bromosuccinimide, ethoxyformic anhydride, and dye-sensitized photooxidation. In terms of biological role, cyclic amidohydrolase that catalyzes the reversible conversion of creatinine to creatine. Is also active toward glycocyamidine, though the reaction rate is very low, but it is completely inert toward hydantoin and its derivatives. This chain is Creatinine amidohydrolase (crnA), found in Pseudomonas putida (Arthrobacter siderocapsulatus).